A 252-amino-acid polypeptide reads, in one-letter code: Carbohydrate deacetylase (252 aa).

Mg(2+) contacts are provided by His-59 and His-122.

Belongs to the YdjC deacetylase family. Homodimer. It depends on Mg(2+) as a cofactor.

Its function is as follows. Probably catalyzes the deacetylation of acetylated carbohydrates an important step in the degradation of oligosaccharides. The chain is Carbohydrate deacetylase from Vibrio cholerae serotype O1 (strain ATCC 39315 / El Tor Inaba N16961).